The chain runs to 425 residues: Alpha/beta hydrolase xenA (425 aa).

D366 is an active-site residue.

It belongs to the AB hydrolase superfamily. FUS2 hydrolase family. Homodimer.

The protein operates within mycotoxin biosynthesis. Its function is as follows. Alpha/beta hydrolase; part of the gene cluster that mediates the biosynthesis of xenoacremones such as xenoacremone A, a compound that shows inhibitory activity toward the PI3K/AKT signaling pathway and which has the ability to induce apoptosis of A549 lung cancer cells. Within the pathway, cooperation of the hybrid PKS-NRPS xenE and the trans-acting enoyl reductase xenG is responsible for the formation of the reduced tyrosine-nonaketide derivative. The alpha/beta hydrolase xenA then accelerates intramolecular nucleophilic attack to give a pyrrolidone derivative. Subsequently, three enzymes, xenF, xenD, and xenC, coordinately participate in the conversion to xenoacremone B. XenF catalyzes sigmatropic rearrangement to form an A-ring, which leads to an unusual intermediate with a hexane ring, which is required for the formation of the tricarbocyclic product. Epoxidation catalyzed by xenD and the formation of the paracyclophane ether catalyzed by xenC initiate a spontaneous intramolecular Diels-Alder (IMDA) reaction to yield xenoacremone B. Spontaneous hydration of xenoacremone B leads to the formation of xenoacremone A, which undergoes subsequent methylation to afford xenoacremone C. This is Alpha/beta hydrolase xenA from Xenoacremonium sinensis (Endophyte fungus).